Consider the following 680-residue polypeptide: Methionine--tRNA ligase (680 aa).

The short motif at 15–25 (PYANGPVHIGH) is the 'HIGH' region element. Zn(2+) is bound by residues C147, C150, C160, and C163. Residues 332–336 (KISTS) carry the 'KMSKS' region motif. T335 provides a ligand contact to ATP. The tRNA-binding domain occupies 579 to 680 (DFLKLDIRVG…AEVAPGSQVK (102 aa)).

The protein belongs to the class-I aminoacyl-tRNA synthetase family. MetG type 1 subfamily. Homodimer. Requires Zn(2+) as cofactor.

It is found in the cytoplasm. The catalysed reaction is tRNA(Met) + L-methionine + ATP = L-methionyl-tRNA(Met) + AMP + diphosphate. In terms of biological role, is required not only for elongation of protein synthesis but also for the initiation of all mRNA translation through initiator tRNA(fMet) aminoacylation. The polypeptide is Methionine--tRNA ligase (Porphyromonas gingivalis (strain ATCC 33277 / DSM 20709 / CIP 103683 / JCM 12257 / NCTC 11834 / 2561)).